A 264-amino-acid polypeptide reads, in one-letter code: Glutamate racemase (264 aa).

Substrate contacts are provided by residues 11 to 12 (DS) and 43 to 44 (YG). Cys-74 serves as the catalytic Proton donor/acceptor. 75–76 (NT) contacts substrate. The Proton donor/acceptor role is filled by Cys-193. 194 to 195 (TH) lines the substrate pocket.

The protein belongs to the aspartate/glutamate racemases family.

The catalysed reaction is L-glutamate = D-glutamate. It participates in cell wall biogenesis; peptidoglycan biosynthesis. Its function is as follows. Provides the (R)-glutamate required for cell wall biosynthesis. In Bifidobacterium longum subsp. infantis (strain ATCC 15697 / DSM 20088 / JCM 1222 / NCTC 11817 / S12), this protein is Glutamate racemase.